The sequence spans 1859 residues: Y' element ATP-dependent helicase protein 1 copy 6 (1859 aa).

The Helicase ATP-binding domain maps to 861–1038 (EIYMADTPSV…LQRIGLTGLA (178 aa)). Residue 874 to 881 (APPGYGKT) coordinates ATP. Positions 1095-1244 (KLLLALFEIE…EFYGLESKKG (150 aa)) constitute a Helicase C-terminal domain. A compositionally biased stretch (low complexity) spans 1318–1461 (ANASTNATTN…ATTTESTNAS (144 aa)). A disordered region spans residues 1318-1485 (ANASTNATTN…RFHPVTDINK (168 aa)). Positions 1462 to 1485 (AKEDANKDGNAEDNRFHPVTDINK) are enriched in basic and acidic residues.

It belongs to the helicase family. Yeast subtelomeric Y' repeat subfamily.

Catalyzes DNA unwinding and is involved in telomerase-independent telomere maintenance. The protein is Y' element ATP-dependent helicase protein 1 copy 6 (YRF1-6) of Saccharomyces cerevisiae (strain ATCC 204508 / S288c) (Baker's yeast).